A 104-amino-acid polypeptide reads, in one-letter code: Thioredoxin-3 (104 aa).

The 103-residue stretch at 2 to 104 folds into the Thioredoxin domain; that stretch reads SKVIHVTSNE…TLRSTLEANI (103 aa). Residues Cys-31 and Cys-34 each act as nucleophile in the active site. Residues Cys-31 and Cys-34 are joined by a disulfide bond.

It belongs to the thioredoxin family.

Participates in various redox reactions through the reversible oxidation of its active center dithiol to a disulfide and catalyzes dithiol-disulfide exchange reactions. The chain is Thioredoxin-3 (trxC) from Dictyostelium discoideum (Social amoeba).